A 121-amino-acid polypeptide reads, in one-letter code: MTAFSFKKEDRLLKRYEFIEIFTSGKTVHSSCFLAGIKKNRKERIRLGITVSKKVGKAARRNRIKRHVREFFRLHRDNLSNCWDINVIAKKKAVNASPAELERSLAELFHKSSREFPSDRQ.

The protein belongs to the RnpA family. As to quaternary structure, consists of a catalytic RNA component (M1 or rnpB) and a protein subunit.

The catalysed reaction is Endonucleolytic cleavage of RNA, removing 5'-extranucleotides from tRNA precursor.. Functionally, RNaseP catalyzes the removal of the 5'-leader sequence from pre-tRNA to produce the mature 5'-terminus. It can also cleave other RNA substrates such as 4.5S RNA. The protein component plays an auxiliary but essential role in vivo by binding to the 5'-leader sequence and broadening the substrate specificity of the ribozyme. This is Ribonuclease P protein component from Desulfosudis oleivorans (strain DSM 6200 / JCM 39069 / Hxd3) (Desulfococcus oleovorans).